The sequence spans 820 residues: Crinkler effector protein 108 (820 aa).

Positions 1 to 17 (MVKLYCAVVGVAGSAFS) are cleaved as a signal peptide. Residues 18–55 (VRVDESDTVDDLKDAIKAKKPNDFKDIDADKLELYVAK) are LQLFLAK domain. The segment at 58–111 (GVWLTEADVKSGVADITGLVRLEVVRAKLFSVGLSDEVVSEVDAQEEAAGRGPV) is DWL domain. The HVLVXXP motif signature appears at 112–117 (NVLVVV). Positions 118–124 (PMKKRRV) match the Host nuclear localization signal motif. Residues 125 to 820 (DAGVDEERRF…MHYDDDEADL (696 aa)) are C-terminal DC effector domain. 3 N-linked (GlcNAc...) asparagine glycosylation sites follow: Asn-268, Asn-371, and Asn-703. The interval 754 to 791 (NINTASFHELRRLEGVGDATAAKIIAERTIRRFSNLED) is hhH DNA-binding domain.

It belongs to the Crinkler effector family.

It localises to the secreted. The protein resides in the host nucleus. Functionally, secreted effector that suppresses plant basal defense and promotes plant susceptibility via targeting promoters of host HSP gene and thus inhibiting their expression. CRN108 binds directly to heat shock elements (HSEs) 5'-GAAnnTTC-3' and interferes with the association of the HSE with the plant heat shock transcription factors, which initializes HSP gene expression in response to stress. The polypeptide is Crinkler effector protein 108 (Phytophthora sojae (Soybean stem and root rot agent)).